A 414-amino-acid chain; its full sequence is Serine/threonine transporter SstT (414 aa).

Transmembrane regions (helical) follow at residues 16 to 36 (GSLV…AWIS), 46 to 66 (LGTL…LMLV), 84 to 104 (ILFL…VFSF), 143 to 163 (ALLN…GFAL), 180 to 200 (AVTF…FGLV), 219 to 239 (LVVL…LLVF), 300 to 320 (MAGA…TLGV), and 332 to 352 (VVAS…LLLI).

Belongs to the dicarboxylate/amino acid:cation symporter (DAACS) (TC 2.A.23) family.

It is found in the cell inner membrane. It catalyses the reaction L-serine(in) + Na(+)(in) = L-serine(out) + Na(+)(out). The catalysed reaction is L-threonine(in) + Na(+)(in) = L-threonine(out) + Na(+)(out). In terms of biological role, involved in the import of serine and threonine into the cell, with the concomitant import of sodium (symport system). The protein is Serine/threonine transporter SstT of Salmonella heidelberg (strain SL476).